Here is a 386-residue protein sequence, read N- to C-terminus: Glyceraldehyde-3-phosphate dehydrogenase, chloroplastic (386 aa).

The N-terminal 45 residues, 1–45 (MAYFKAVAYLAALASAAAFNPGSSFVPRLNAPATQPKAAKMTGPT), are a transit peptide targeting the chloroplast. NADP(+) is bound by residues 58–59 (RI) and R125. Residues 197 to 199 (SCT), T228, 257 to 258 (TG), and R280 contribute to the D-glyceraldehyde 3-phosphate site. Catalysis depends on C198, which acts as the Nucleophile. N362 provides a ligand contact to NADP(+).

This sequence belongs to the glyceraldehyde-3-phosphate dehydrogenase family. As to quaternary structure, homotetramer.

It localises to the plastid. The protein resides in the chloroplast. The catalysed reaction is D-glyceraldehyde 3-phosphate + phosphate + NADP(+) = (2R)-3-phospho-glyceroyl phosphate + NADPH + H(+). It catalyses the reaction D-glyceraldehyde 3-phosphate + phosphate + NAD(+) = (2R)-3-phospho-glyceroyl phosphate + NADH + H(+). It participates in carbohydrate biosynthesis; Calvin cycle. This is Glyceraldehyde-3-phosphate dehydrogenase, chloroplastic (GAPC1) from Guillardia theta (Cryptophyte).